Reading from the N-terminus, the 902-residue chain is 4-hydroxyphenylacetate decarboxylase glycyl radical subunit (902 aa).

The PFL domain maps to 38–774 (KRAEDLLDVY…ATLATPDGRL (737 aa)). Residues serine 348 and cysteine 507 each contribute to the 4-hydroxyphenylacetate site. The active-site Cysteine radical intermediate is cysteine 507. Glutamate 509 acts as the Proton donor in catalysis. 4-hydroxyphenylacetate contacts are provided by histidine 540 and glutamate 641. The Glycine radical domain occupies 782 to 902 (GSVSAYAGTD…VIARTEYEGV (121 aa)). The residue at position 877 (glycine 877) is a Glycine radical.

This sequence belongs to the glycyl radical enzyme (GRE) family. HPAD subfamily. Heterooctamer consisting of 4 large (HpdB) subunits and 4 small (HpdC) subunits, arranged as a tetramer of heterodimers. Also forms a catalytically inactive homodimer. Requires the activating protein CsdA to generate the key active site glycyl radical that is involved in catalysis. In terms of processing, phosphorylated on serine. Phosphorylation may trigger the formation of the active heterooctamers and thereby regulates enzyme activity.

It carries out the reaction 4-hydroxyphenylacetate + H(+) = 4-methylphenol + CO2. It catalyses the reaction 3,4-dihydroxyphenylacetate + H(+) = 4-methylcatechol + CO2. Its function is as follows. Glycyl radical subunit of the HPA decarboxylase that decarboxylates phenylacetates with a hydroxyl group in the p-position. Active toward 4-hydroxyphenylacetate and 3,4-dihydroxyphenylacetate, forming 4-methylphenol and 4-methylcatechol, respectively. Is likely involved in the catabolism of aromatic amino acids such as tyrosine fermentation. 4-methylphenol (p-cresol) formation provides metabolic toxicity, which allows an active suppression of other microbes and may provide growth advantages for the producers in highly competitive environments. The large subunit is the catalytic subunit that binds the substrate. In Clostridioides difficile (strain 630) (Peptoclostridium difficile), this protein is 4-hydroxyphenylacetate decarboxylase glycyl radical subunit.